We begin with the raw amino-acid sequence, 174 residues long: NADH-ubiquinone oxidoreductase chain 6 (174 aa).

5 helical membrane-spanning segments follow: residues 1–21, 24–44, 46–66, 86–106, and 151–171; these read MTYV…GFSS, SPIY…GIVL, FGGS…MLVV, VMIL…VVYM, and WLMV…IEIT.

The protein belongs to the complex I subunit 6 family. As to quaternary structure, core subunit of respiratory chain NADH dehydrogenase (Complex I) which is composed of 45 different subunits.

It localises to the mitochondrion inner membrane. It catalyses the reaction a ubiquinone + NADH + 5 H(+)(in) = a ubiquinol + NAD(+) + 4 H(+)(out). Functionally, core subunit of the mitochondrial membrane respiratory chain NADH dehydrogenase (Complex I) which catalyzes electron transfer from NADH through the respiratory chain, using ubiquinone as an electron acceptor. Essential for the catalytic activity and assembly of complex I. This is NADH-ubiquinone oxidoreductase chain 6 (MT-ND6) from Oryctolagus cuniculus (Rabbit).